Here is a 324-residue protein sequence, read N- to C-terminus: Non-homologous end joining protein Ku 1 (324 aa).

The Ku domain maps to 10 to 193 (INFGLVTIPV…AKPSDKEIQM (184 aa)). The tract at residues 256–324 (QARRGRGGQV…SGGRRRRRAS (69 aa)) is disordered. The segment covering 281 to 292 (AELDKKAKELGI) has biased composition (basic and acidic residues).

It belongs to the prokaryotic Ku family. Homodimer. Interacts with LigD.

Its function is as follows. With LigD forms a non-homologous end joining (NHEJ) DNA repair enzyme, which repairs dsDNA breaks with reduced fidelity. Binds linear dsDNA with 5'- and 3'- overhangs but not closed circular dsDNA nor ssDNA. Recruits and stimulates the ligase activity of LigD. This chain is Non-homologous end joining protein Ku 1, found in Saccharopolyspora erythraea (strain ATCC 11635 / DSM 40517 / JCM 4748 / NBRC 13426 / NCIMB 8594 / NRRL 2338).